Consider the following 149-residue polypeptide: MKCPFCSHLETQVIETRVFEDAASIRRRRQCAACSKRFTTYERSDVSFPAVVKKDGRRVEYGHDKLLASFKLALRKRPVSTGRIDSAIERIEEKLLNLGLREVPSSRIGELVMRELKKLDKVAYIRFASVYRSFEGIDDFRALVDEVRK.

A zinc finger lies at 3–34 (CPFCSHLETQVIETRVFEDAASIRRRRQCAAC). The ATP-cone domain occupies 49–139 (PAVVKKDGRR…VYRSFEGIDD (91 aa)).

This sequence belongs to the NrdR family. The cofactor is Zn(2+).

In terms of biological role, negatively regulates transcription of bacterial ribonucleotide reductase nrd genes and operons by binding to NrdR-boxes. In Verminephrobacter eiseniae (strain EF01-2), this protein is Transcriptional repressor NrdR.